Reading from the N-terminus, the 380-residue chain is Cytochrome b (380 aa).

The next 4 membrane-spanning stretches (helical) occupy residues 33-53 (FGSL…FLAM), 77-98 (WLIR…YLHI), 113-133 (WNVG…GYVL), and 178-198 (FFAF…IHLI). Histidine 83 and histidine 97 together coordinate heme b. Heme b contacts are provided by histidine 182 and histidine 196. Residue histidine 201 coordinates a ubiquinone. 4 helical membrane passes run 226-246 (YKDL…ALFS), 288-308 (LGGV…PILH), 320-340 (FSQF…WIGG), and 347-367 (FVII…VMIP).

Belongs to the cytochrome b family. As to quaternary structure, the cytochrome bc1 complex contains 3 respiratory subunits (MT-CYB, CYC1 and UQCRFS1), 2 core proteins (UQCRC1 and UQCRC2) and probably 6 low-molecular weight proteins. It depends on heme b as a cofactor.

It is found in the mitochondrion inner membrane. Component of the ubiquinol-cytochrome c reductase complex (complex III or cytochrome b-c1 complex) that is part of the mitochondrial respiratory chain. The b-c1 complex mediates electron transfer from ubiquinol to cytochrome c. Contributes to the generation of a proton gradient across the mitochondrial membrane that is then used for ATP synthesis. The protein is Cytochrome b (mt-cyb) of Paralichthys olivaceus (Bastard halibut).